The primary structure comprises 417 residues: Serine hydroxymethyltransferase (417 aa).

At lysine 54 the chain carries N6-acetyllysine. (6S)-5,6,7,8-tetrahydrofolate contacts are provided by residues leucine 121 and 125–127 (GHL). The residue at position 229 (lysine 229) is an N6-(pyridoxal phosphate)lysine. N6-acetyllysine is present on residues lysine 250, lysine 285, and lysine 354. 355-357 (SPF) is a (6S)-5,6,7,8-tetrahydrofolate binding site. The residue at position 375 (lysine 375) is an N6-acetyllysine.

It belongs to the SHMT family. Homodimer. Requires pyridoxal 5'-phosphate as cofactor.

It localises to the cytoplasm. The catalysed reaction is (6R)-5,10-methylene-5,6,7,8-tetrahydrofolate + glycine + H2O = (6S)-5,6,7,8-tetrahydrofolate + L-serine. Its pathway is one-carbon metabolism; tetrahydrofolate interconversion. It functions in the pathway amino-acid biosynthesis; glycine biosynthesis; glycine from L-serine: step 1/1. Its function is as follows. Catalyzes the reversible interconversion of serine and glycine with tetrahydrofolate (THF) serving as the one-carbon carrier. This reaction serves as the major source of one-carbon groups required for the biosynthesis of purines, thymidylate, methionine, and other important biomolecules. Also exhibits THF-independent aldolase activity toward beta-hydroxyamino acids, producing glycine and aldehydes, via a retro-aldol mechanism. This Shigella dysenteriae serotype 1 (strain Sd197) protein is Serine hydroxymethyltransferase.